A 28-amino-acid chain; its full sequence is FWGALFKTVAKVVAPFVPDIVKWVQEKV.

Expressed by the venom gland.

It localises to the secreted. In terms of biological role, antimicrobial peptide active against Gram-negative bacterium E.coli MH1 (MIC=3.5 uM) and P.aeruginosa PAO1 (MIC=10 uM) and against Gram-positive bacterium A.globiformis VKM Ac-1112 (MIC=1.25 uM). The polypeptide is M-ectatotoxin-Eb2c (Ectatomma brunneum (Ant)).